The following is a 479-amino-acid chain: Probable periplasmic serine endoprotease DegP-like (479 aa).

Positions 1 to 27 are cleaved as a signal peptide; the sequence is MSIPRMKSYFSLIAAVLMLGQVATAQA. The interval 77–99 is disordered; sequence LERSMPPGSRPPGAGKGDRQRET. Residues histidine 119, aspartate 149, and serine 222 each act as charge relay system in the active site. Residues 220–222 and 277–281 contribute to the substrate site; these read GNS and LGVVI. 2 PDZ domains span residues 266–357 and 363–468; these read LKAS…IRDG and TVTV…LRQG.

Belongs to the peptidase S1C family.

The protein localises to the periplasm. It catalyses the reaction Acts on substrates that are at least partially unfolded. The cleavage site P1 residue is normally between a pair of hydrophobic residues, such as Val-|-Val.. Might be efficient in the degradation of transiently denatured and unfolded proteins which accumulate in the periplasm following stress conditions. The sequence is that of Probable periplasmic serine endoprotease DegP-like (mucD) from Pseudomonas savastanoi pv. phaseolicola (strain 1448A / Race 6) (Pseudomonas syringae pv. phaseolicola (strain 1448A / Race 6)).